A 182-amino-acid chain; its full sequence is ATP synthase subunit delta (182 aa).

This sequence belongs to the ATPase delta chain family. As to quaternary structure, F-type ATPases have 2 components, F(1) - the catalytic core - and F(0) - the membrane proton channel. F(1) has five subunits: alpha(3), beta(3), gamma(1), delta(1), epsilon(1). CF(0) has four main subunits: a(1), b(1), b'(1) and c(10-14). The alpha and beta chains form an alternating ring which encloses part of the gamma chain. F(1) is attached to F(0) by a central stalk formed by the gamma and epsilon chains, while a peripheral stalk is formed by the delta, b and b' chains.

The protein localises to the cellular thylakoid membrane. F(1)F(0) ATP synthase produces ATP from ADP in the presence of a proton or sodium gradient. F-type ATPases consist of two structural domains, F(1) containing the extramembraneous catalytic core and F(0) containing the membrane proton channel, linked together by a central stalk and a peripheral stalk. During catalysis, ATP synthesis in the catalytic domain of F(1) is coupled via a rotary mechanism of the central stalk subunits to proton translocation. Functionally, this protein is part of the stalk that links CF(0) to CF(1). It either transmits conformational changes from CF(0) to CF(1) or is implicated in proton conduction. The polypeptide is ATP synthase subunit delta (Parasynechococcus marenigrum (strain WH8102)).